The sequence spans 820 residues: Leucine--tRNA ligase (820 aa).

Positions 40 to 51 match the 'HIGH' region motif; it reads PYPSGAGLHVGH. The 'KMSKS' region signature appears at 601–605; the sequence is KMSKS. Lys604 lines the ATP pocket.

It belongs to the class-I aminoacyl-tRNA synthetase family.

The protein resides in the cytoplasm. It catalyses the reaction tRNA(Leu) + L-leucine + ATP = L-leucyl-tRNA(Leu) + AMP + diphosphate. The protein is Leucine--tRNA ligase of Chlamydia abortus (strain DSM 27085 / S26/3) (Chlamydophila abortus).